The following is a 148-amino-acid chain: 3-hydroxyacyl-[acyl-carrier-protein] dehydratase FabZ (148 aa).

His48 is a catalytic residue.

The protein belongs to the thioester dehydratase family. FabZ subfamily.

Its subcellular location is the cytoplasm. The enzyme catalyses a (3R)-hydroxyacyl-[ACP] = a (2E)-enoyl-[ACP] + H2O. In terms of biological role, involved in unsaturated fatty acids biosynthesis. Catalyzes the dehydration of short chain beta-hydroxyacyl-ACPs and long chain saturated and unsaturated beta-hydroxyacyl-ACPs. The sequence is that of 3-hydroxyacyl-[acyl-carrier-protein] dehydratase FabZ from Campylobacter concisus (strain 13826).